The primary structure comprises 623 residues: Phosphoglucomutase, chloroplastic (623 aa).

A chloroplast-targeting transit peptide spans 1-63; the sequence is MTSTYTRFDT…SSSSSSVVAG (63 aa). Alpha-D-glucose 1,6-bisphosphate-binding residues include R88 and S181. The Phosphoserine intermediate role is filled by S181. The Mg(2+) site is built by S181, D346, D348, and D350. Residue S181 is modified to Phosphoserine. Residues D350, R351, T414, E433, S435, and K446 each contribute to the alpha-D-glucose 1,6-bisphosphate site.

It belongs to the phosphohexose mutase family. In terms of assembly, monomer. Mg(2+) serves as cofactor. Expressed in flowers, siliques and germinating seeds.

The protein localises to the plastid. Its subcellular location is the chloroplast. The catalysed reaction is alpha-D-glucose 1-phosphate = alpha-D-glucose 6-phosphate. It carries out the reaction O-phospho-L-seryl-[protein] + alpha-D-glucose 1-phosphate = alpha-D-glucose 1,6-bisphosphate + L-seryl-[protein]. The enzyme catalyses alpha-D-glucose 1,6-bisphosphate + L-seryl-[protein] = O-phospho-L-seryl-[protein] + alpha-D-glucose 6-phosphate. Its activity is regulated as follows. Inhibited by the Calvin cycle intermediates fructose-1,6-bisphosphate and ribulose-1,5-bisphosphate. Functionally, catalyzes the reversible isomerization of alpha-D-glucose 1-phosphate to alpha-D-glucose 6-phosphate. The mechanism proceeds via the intermediate compound alpha-D-glucose 1,6-bisphosphate. This enzyme participates in both the breakdown and synthesis of glucose. Factor that affects seed oil content. Accumulated starch in young embryos may play an important role in providing carbon resources for seed storage lipid biosynthesis in oilseed plants. Promotes gravitropic responses, negative in shoots but positive in roots, by facilitating starch granules (statoliths) formation in hypocotyls and roots columella. The sequence is that of Phosphoglucomutase, chloroplastic from Arabidopsis thaliana (Mouse-ear cress).